The chain runs to 964 residues: MKLKKLYIFYFDIYEYFLCDLQLSETNEILKYIKNNIDKYTNSFNSSYIILKDFNIITNEVELQSYYNFTEDSKIKLNNTDLILFMTPYKIERIYSKYNRNFNQYRWFYILNNIEPAGSYKINMSNLQNINIYDKNKTAYYCKNPKLLFLTPIEIDKFIPVSRVSIDIECQHFGEFPTPNKFPISHICIDWFMESNINPVKKIITLINYEIIKNYKGEQKDRFIYTEIDELLTKDKVYITIYCTEKYMLHFILYTLRKDFDYILTYNGHSFDFTYIQGRRKFYNLNELCLVNAHKSNELKIYSYNKDTTYEIDSNNGIIFLDLYNYIKKIYNYNSYKLGEIAKERFNILSKIIDNGDEYIIMPLDTADNKNKVSIFYDVIRTANYCFINNIPYKIKDKTKIINDKEKLYDPISIENSLYQQFKIYKNNTPISDETTKVMLSKDDVDIGNKNAYVNFTKDKSDDIAYYCTHDTVLCNCIFKYDMIHDKVIAFSNEYLLPQYMSFKYKSTTNISGLLLKTLFCNRSMIVSGNLEFEKFEGGYVLEPKQKYIDSITAVFDFNSEYPSNIIEANLSPEKVEKVIKLQDDEYAVDIVENYLKEKYPYPDYCYMLIKKDKTYKFIVMDRRKPGIITQMIDKGMKSKNEYKNLKNINKNNPVLYNYYTSALYSKKITINSLYGLLGSERFDFNSPYCAEYCTALGQKCIKYIKNLVDKSRYIDNNLYLNEQNNPFSNEPVITRYSGNLDVNFTFYIIYGDTDSLFINIKFDNKFDNKEDLVNKSHECFQFLSNIINDEKNIILSKNFNFEYEKMYIWMLLLAKKKYIGEVVSSMNPLQLISDSKGTALIRRDCTEIHKTILKNTIDILKEYLTNNCTIQDVNNKINNYLMFTFKNIIENIQNLDINEFKKSVKYTGIYKDPNFYIELCVKKYNSKNPNDKIVKGQRFDFIYAHEIDIWDIETKKWNTKYTS.

Belongs to the DNA polymerase type-B family.

The enzyme catalyses DNA(n) + a 2'-deoxyribonucleoside 5'-triphosphate = DNA(n+1) + diphosphate. In terms of biological role, catalyzes DNA synthesis. This Choristoneura biennis entomopoxvirus (CbEPV) protein is DNA polymerase (POL).